A 213-amino-acid polypeptide reads, in one-letter code: Agglutinin isolectin 2 (213 aa).

Positions 1-27 are cleaved as a signal peptide; that stretch reads MRKMMSTMALTLGAAVFLAFAAATAQA. Gln-28 is modified (pyrrolidone carboxylic acid). Chitin-binding type-1 domains follow at residues 28 to 69, 70 to 112, 113 to 155, and 156 to 198; these read QRCG…ACWT, SKRC…PCRA, DIKC…ACST, and DKPC…GCDA. 16 disulfides stabilise this stretch: Cys-30–Cys-45, Cys-39–Cys-51, Cys-44–Cys-58, Cys-62–Cys-67, Cys-73–Cys-88, Cys-82–Cys-94, Cys-87–Cys-101, Cys-105–Cys-110, Cys-116–Cys-131, Cys-125–Cys-137, Cys-130–Cys-144, Cys-148–Cys-153, Cys-159–Cys-174, Cys-168–Cys-180, Cys-173–Cys-187, and Cys-191–Cys-196. 37 to 39 lines the substrate pocket; that stretch reads MEC. A substrate-binding site is contributed by 89–100; sequence SQYGHCGFGAEY. 141 to 142 contacts substrate; sequence SE. Positions 199–213 are excised as a propeptide; the sequence is VFAGAITANSTLLAE.

As to quaternary structure, homodimer, u-shaped.

Its function is as follows. N-acetyl-D-glucosamine / N-acetyl-D-neuraminic acid binding lectin. This is Agglutinin isolectin 2 from Triticum aestivum (Wheat).